Reading from the N-terminus, the 96-residue chain is ASNSD1 upstream open reading frame protein (96 aa).

A compositionally biased stretch (basic and acidic residues) spans 1-10 (MPSRGTRPED). The tract at residues 1 to 28 (MPSRGTRPEDSSVLIPTDNSTPHKEDLS) is disordered. The stretch at 23–96 (HKEDLSSKIK…ENLDKTKIKK (74 aa)) forms a coiled coil.

As to quaternary structure, component of the PAQosome complex which is responsible for the biogenesis of several protein complexes and which consists of R2TP complex members RUVBL1, RUVBL2, RPAP3 and PIH1D1, URI complex members PFDN2, PFDN6, PDRG1, UXT and URI1 as well as ASDURF, POLR2E and DNAAF10/WDR92.

The protein localises to the cytoplasm. This chain is ASNSD1 upstream open reading frame protein, found in Homo sapiens (Human).